The primary structure comprises 256 residues: Pimeloyl-[acyl-carrier protein] methyl ester esterase (256 aa).

The AB hydrolase-1 domain occupies 15–242 (HLVLLHGWGL…AAHAPFISHP (228 aa)). Residues Trp-22, 82 to 83 (SL), and 143 to 147 (FLALQ) contribute to the substrate site. Ser-82 acts as the Nucleophile in catalysis. Active-site residues include Asp-207 and His-235. His-235 provides a ligand contact to substrate.

This sequence belongs to the AB hydrolase superfamily. Carboxylesterase BioH family. As to quaternary structure, monomer.

The protein localises to the cytoplasm. The catalysed reaction is 6-carboxyhexanoyl-[ACP] methyl ester + H2O = 6-carboxyhexanoyl-[ACP] + methanol + H(+). It participates in cofactor biosynthesis; biotin biosynthesis. In terms of biological role, the physiological role of BioH is to remove the methyl group introduced by BioC when the pimeloyl moiety is complete. It allows to synthesize pimeloyl-ACP via the fatty acid synthetic pathway through the hydrolysis of the ester bonds of pimeloyl-ACP esters. This chain is Pimeloyl-[acyl-carrier protein] methyl ester esterase, found in Escherichia coli (strain K12 / MC4100 / BW2952).